Reading from the N-terminus, the 1242-residue chain is Myosin-16 (1242 aa).

One can recognise a Myosin N-terminal SH3-like domain in the interval 6–55 (MVDSHVWVEDPERAWIDGVVLNIKGEEAEIKTNDGRDVIANLSRLYPKDT). Residues 60-729 (EGVEDMTRLS…QMAELDAHRT (670 aa)) enclose the Myosin motor domain. ATP is bound by residues 154-161 (GESGSGKT) and 207-215 (NNNSSRFGK). 4 actin-binding regions span residues 493–527 (LIEK…YHTF), 529–552 (DHKR…AGDV), 587–610 (FPPL…KLQL), and 610–632 (LQQL…KPNN). 6 IQ domains span residues 732–761 (LGES…ASVN), 755–784 (MRRA…EEAA), 780–809 (REEA…SALT), 803–832 (TKSS…TRAA), 828–857 (TTRA…VSLL), and 851–880 (LKRV…ADRK). 2 disordered regions span residues 869–893 (KQLG…ELSN) and 908–1042 (EQSD…ERKT). Residues 876–893 (QADRKEETEKERKVELSN) show a composition bias toward basic and acidic residues. 6 repeat units span residues 876 to 908 (QADR…LHSE), 909 to 940 (QSDD…LHSE), 941 to 965 (QSDD…GHSD), 966 to 997 (QSDD…MHSD), 998 to 1029 (QSDD…VHSD), and 1030 to 1061 (QSDD…TCSE). A 6 X 33 AA repeats of Q-S-D-D-x-E-E-x(2)-H-x-R-K-x-K-x(2)-I-x(2)-E-D-G-x(3)-S-x-V-x-H-S-x region spans residues 876–1061 (QADRKEETEK…IQKSFVTCSE (186 aa)). Residues 948-966 (GHERKTKLSIESEDGHSDQ) show a composition bias toward basic and acidic residues. Residues 1079–1142 (DTEIESLTAE…QLQDSLNRLL (64 aa)) are a coiled coil. Residues 1175-1242 (DLADSSENSE…DKEGGFEDYF (68 aa)) form a disordered region. Residues 1179–1191 (SSENSEASSSDSD) show a composition bias toward low complexity. The span at 1199–1224 (PSSDNFSTFNPNQLQVIVQDLSTTEA) shows a compositional bias: polar residues. Basic and acidic residues predominate over residues 1225 to 1242 (KGTESYDSDKEGGFEDYF).

It belongs to the TRAFAC class myosin-kinesin ATPase superfamily. Myosin family. Plant myosin class XI subfamily. In terms of assembly, homodimer. In terms of tissue distribution, expressed in flowers and leaves.

The protein resides in the cytoplasm. Myosin heavy chain that is required for the cell cycle-regulated transport of various organelles and proteins for their segregation. Functions by binding with its tail domain to receptor proteins on organelles and exerting force with its N-terminal motor domain against actin filaments, thereby transporting its cargo along polarized actin cables. This is Myosin-16 (XI-J) from Arabidopsis thaliana (Mouse-ear cress).